A 172-amino-acid chain; its full sequence is Photosystem I assembly protein Ycf3 (172 aa).

TPR repeat units follow at residues 35 to 68, 72 to 105, and 120 to 153; these read AFSYYRDGMSAQSEGEYAEALENYYEALRLEEDP, SYILYNIGLIYASNGEYVKALEYYHQALDLNSQL, and GVKASEKKELDLARTLFDKAAEYWKQAIRLSPNN.

The protein belongs to the Ycf3 family.

The protein localises to the plastid. Its subcellular location is the chloroplast thylakoid membrane. In terms of biological role, essential for the assembly of the photosystem I (PSI) complex. May act as a chaperone-like factor to guide the assembly of the PSI subunits. The chain is Photosystem I assembly protein Ycf3 from Guillardia theta (Cryptophyte).